Reading from the N-terminus, the 2155-residue chain is Alpha-tectorin (2155 aa).

Residues 1-22 (MNYSSFLRIWVSFIFALVQHQA) form the signal peptide. N-linked (GlcNAc...) asparagine glycosylation is found at Asn-34, Asn-187, Asn-215, Asn-278, Asn-455, Asn-506, Asn-528, and Asn-560. The 155-residue stretch at 98–252 (PFWADVHNGI…GRWAFKVDGK (155 aa)) folds into the NIDO domain. Positions 260-314 (CTSRGQFLRRGEVFWDDLNCTVKCRCLDFNNEIYCQEASCSPYEVCEPKGKFFYC) constitute a VWFC domain. The VWFD 1 domain occupies 320 to 500 (STCVVFGEPH…RVYHADWKCD (181 aa)). 2 disulfides stabilise this stretch: Cys-322–Cys-461 and Cys-344–Cys-499. One can recognise a TIL 1 domain in the interval 597 to 650 (CPSFSHYSVCTSSCPDTCSDLTASRNCATPCTEGCECNQGFVLSTSQCVPLHKC). Residues Asn-670, Asn-687, Asn-813, Asn-843, Asn-855, Asn-898, Asn-920, Asn-931, and Asn-949 are each glycosylated (N-linked (GlcNAc...) asparagine). In terms of domain architecture, VWFD 2 spans 711-886 (TVCLLSQNQV…SWTTFEEICN (176 aa)). Cysteines 713 and 849 form a disulfide. Residues 984-1036 (CPENSHFEECITCTETCETLTLGPICVDSCSEGCQCDEGYALLGSQCVTRSEC) form the TIL 2 domain. N-linked (GlcNAc...) asparagine glycosylation is found at Asn-1048, Asn-1235, and Asn-1364. The 181-residue stretch at 1098–1278 (ASCIVSGYGH…SWVKRDTFCQ (181 aa)) folds into the VWFD 3 domain. Disulfide bonds link Cys-1100–Cys-1241 and Cys-1122–Cys-1277. In terms of domain architecture, TIL 3 spans 1372–1425 (CPPNSHYESCVSVCQPRCAAIRLKSDCSHYCVEGCHCDAGYVLNGKSCILPHSC). The region spanning 1485–1666 (SYCLAAGGGV…QKRPLAPSCN (182 aa)) is the VWFD 4 domain. Disulfide bonds link Cys-1487–Cys-1622, Cys-1509–Cys-1665, Cys-1717–Cys-1775, Cys-1741–Cys-1784, Cys-1786–Cys-1818, Cys-1806–Cys-1898, and Cys-1837–Cys-1857. Asn-1538, Asn-1565, Asn-1756, Asn-1772, Asn-1794, Asn-1851, Asn-1864, Asn-1880, Asn-1920, and Asn-1939 each carry an N-linked (GlcNAc...) asparagine glycan. The 255-residue stretch at 1805 to 2059 (TCKAAQMEVS…YSCKITCPHN (255 aa)) folds into the ZP domain. 3 disulfide bridges follow: Cys-1980–Cys-2040, Cys-2001–Cys-2056, and Cys-2045–Cys-2052. Asn-2091 carries GPI-anchor amidated asparagine lipidation. Positions 2092–2155 (GGCEQICTSR…HFVYKSGTTS (64 aa)) are cleaved as a propeptide — removed in mature form.

May form homomeric filament after self-association or heteromeric filament after association with beta-tectorin. Interacts with CEACAM16. In terms of processing, the presence of a hydrophobic C-terminus preceded by a potential cleavage site strongly suggests that tectorins are synthesized as glycosylphosphatidylinositol-linked, membrane-bound precursors. Tectorins are targeted to the apical surface of the inner ear epithelia by the lipid and proteolytically released into the extracellular compartment.

The protein resides in the cell membrane. It localises to the secreted. The protein localises to the extracellular space. Its subcellular location is the extracellular matrix. One of the major non-collagenous components of the tectorial membrane. The tectorial membrane is an extracellular matrix of the inner ear that covers the neuroepithelium of the cochlea and contacts the stereocilia bundles of specialized sensory hair cells. Sound induces movement of these hair cells relative to the tectorial membrane, deflects the stereocilia and leads to fluctuations in hair-cell membrane potential, transducing sound into electrical signals. In Homo sapiens (Human), this protein is Alpha-tectorin (TECTA).